Consider the following 524-residue polypeptide: MALQKFPLMGLLLLLTILVSVTTAVDDPVCPATSKLSRASFPNGFLFGTATAAFQVEGAINETCRGPALWDIYCRRNPERCSGDHADVAVDFFHRYKEDIQLMKNLNTDAFRLSIAWSRIFPHGRKEKGVSQAGVQFYHELIDELLKNGIVPFVTVFHWDTPQDLEDEYGGFLSQNIVKDFREYADYVFTEYGGKVKNWITFNEPWVFAHAGYDLGKKAPGRCSRYVPGCEDREGQSGKEAYLVSHNLLNAHAEAVEVFRQKVKGGKIGIAHSPAWFEPHDLKDSNDAPTVSRVLDFMLGWHLEPTTSGDYPQIMKDLLGYRLPQFTAAQKAKLKDSTDFVGLNYYTSTFSNYNEKPDPSKPSWKQDSLVSWEPKNVDHSAIGSMPLTAALPVYAKGFRKLLKYIKDKYANPEIMIMENGYGDKLGTTDSVDVGTADHNRKYYLQRHLLAMNEAICIDKVRVTGYFVWSLLDNFEWQDGYKNRFGLYYVDFKNNLTRYEKESAKYYKDFLAQGVRPSALKRDEL.

The N-terminal stretch at Met1 to Ala24 is a signal peptide. Gln55 serves as a coordination point for a beta-D-glucoside. Asn61 carries an N-linked (GlcNAc...) asparagine glycan. Residues His158 and Asn203–Glu204 contribute to the a beta-D-glucoside site. Glu204 acts as the Proton donor in catalysis. Cys223 and Cys230 are oxidised to a cystine. Residues Tyr346, Glu418, Trp468, Glu475–Trp476, and Phe484 contribute to the a beta-D-glucoside site. Glu418 functions as the Nucleophile in the catalytic mechanism. A glycan (N-linked (GlcNAc...) asparagine) is linked at Asn494. The Prevents secretion from ER signature appears at Arg521–Leu524.

This sequence belongs to the glycosyl hydrolase 1 family. As to quaternary structure, component of the PYK10 complex, at least composed of PYK10/BGLU23, BGLU21, BGLU22, JAL22, JAL23, PBP1/JAL30, PBP2/JAL31, JAL32, JAL33, JAL34, JAL35, GLL22 and GLL23. Expressed exclusively in roots.

Its subcellular location is the endoplasmic reticulum lumen. It catalyses the reaction Hydrolysis of terminal, non-reducing beta-D-glucosyl residues with release of beta-D-glucose.. Activated upon binding to PBP1 or PBP2. Beta-D-glucosidase active on scopolin &gt;&gt; esculin &gt;&gt; 4-MU-glucoside &gt; DIMBOA-glucoside. No activity with pNP-glucoside, oNP-glucoside and sinigrin as substrates. The polypeptide is Beta-glucosidase 21 (Arabidopsis thaliana (Mouse-ear cress)).